The primary structure comprises 347 residues: DNA-directed RNA polymerase subunit alpha (347 aa).

Residues methionine 1–asparagine 226 are alpha N-terminal domain (alpha-NTD). The tract at residues histidine 243–leucine 347 is alpha C-terminal domain (alpha-CTD). A disordered region spans residues threonine 326–leucine 347.

It belongs to the RNA polymerase alpha chain family. As to quaternary structure, homodimer. The RNAP catalytic core consists of 2 alpha, 1 beta, 1 beta' and 1 omega subunit. When a sigma factor is associated with the core the holoenzyme is formed, which can initiate transcription.

It catalyses the reaction RNA(n) + a ribonucleoside 5'-triphosphate = RNA(n+1) + diphosphate. In terms of biological role, DNA-dependent RNA polymerase catalyzes the transcription of DNA into RNA using the four ribonucleoside triphosphates as substrates. The protein is DNA-directed RNA polymerase subunit alpha of Mycobacterium leprae (strain TN).